The sequence spans 126 residues: B3 domain-containing protein At5g54067 (126 aa).

Residues 20–118 (SDIVGNVVLP…KFVVLNFQYS (99 aa)) constitute a DNA-binding region (TF-B3).

It localises to the nucleus. This is B3 domain-containing protein At5g54067 from Arabidopsis thaliana (Mouse-ear cress).